A 451-amino-acid polypeptide reads, in one-letter code: Exodeoxyribonuclease 7 large subunit (451 aa).

This sequence belongs to the XseA family. As to quaternary structure, heterooligomer composed of large and small subunits.

Its subcellular location is the cytoplasm. It catalyses the reaction Exonucleolytic cleavage in either 5'- to 3'- or 3'- to 5'-direction to yield nucleoside 5'-phosphates.. Functionally, bidirectionally degrades single-stranded DNA into large acid-insoluble oligonucleotides, which are then degraded further into small acid-soluble oligonucleotides. This Thiobacillus denitrificans (strain ATCC 25259 / T1) protein is Exodeoxyribonuclease 7 large subunit.